The following is a 25-amino-acid chain: Ocellatin-L1 (25 aa).

Residue Leu25 is modified to Leucine amide.

The protein belongs to the frog skin active peptide (FSAP) family. Ocellatin subfamily. Expressed by the skin glands.

The protein resides in the secreted. Antimicrobial peptide with activity against Gram-negative bacteria but without activity against Gram-positive bacteria. Shows a low activity in stimulating insulin release from rat BRIN-BD11 beta cells, and acts without loss of integrity of the plasma membrane. Has very low hemolytic activity. Shows weak amphipathicity in its alpha-helical conformation. The protein is Ocellatin-L1 of Leptodactylus laticeps (Santa Fe frog).